We begin with the raw amino-acid sequence, 100 residues long: Small ribosomal subunit protein uS17 (100 aa).

The protein belongs to the universal ribosomal protein uS17 family. As to quaternary structure, part of the 30S ribosomal subunit.

In terms of biological role, one of the primary rRNA binding proteins, it binds specifically to the 5'-end of 16S ribosomal RNA. The polypeptide is Small ribosomal subunit protein uS17 (Erythrobacter litoralis (strain HTCC2594)).